A 246-amino-acid polypeptide reads, in one-letter code: 1-(5-phosphoribosyl)-5-[(5-phosphoribosylamino)methylideneamino] imidazole-4-carboxamide isomerase (246 aa).

The Proton acceptor role is filled by Asp7. Asp130 functions as the Proton donor in the catalytic mechanism.

This sequence belongs to the HisA/HisF family.

It is found in the cytoplasm. It catalyses the reaction 1-(5-phospho-beta-D-ribosyl)-5-[(5-phospho-beta-D-ribosylamino)methylideneamino]imidazole-4-carboxamide = 5-[(5-phospho-1-deoxy-D-ribulos-1-ylimino)methylamino]-1-(5-phospho-beta-D-ribosyl)imidazole-4-carboxamide. The protein operates within amino-acid biosynthesis; L-histidine biosynthesis; L-histidine from 5-phospho-alpha-D-ribose 1-diphosphate: step 4/9. The polypeptide is 1-(5-phosphoribosyl)-5-[(5-phosphoribosylamino)methylideneamino] imidazole-4-carboxamide isomerase (Sodalis glossinidius (strain morsitans)).